Consider the following 26-residue polypeptide: RMAGRNRTEFYKLLSRHELDANDFKE.

Post-translationally, phosphorylated by YfhK.

Functionally, probable member of a two-component regulatory system YfhA/YfhK. This is an uncharacterized protein from Klebsiella oxytoca.